The following is a 420-amino-acid chain: UDP-N-acetylglucosamine 1-carboxyvinyltransferase (420 aa).

22-23 (KN) lines the phosphoenolpyruvate pocket. R93 provides a ligand contact to UDP-N-acetyl-alpha-D-glucosamine. Catalysis depends on C117, which acts as the Proton donor. C117 carries the post-translational modification 2-(S-cysteinyl)pyruvic acid O-phosphothioketal. Residues D307 and I329 each contribute to the UDP-N-acetyl-alpha-D-glucosamine site.

It belongs to the EPSP synthase family. MurA subfamily.

The protein localises to the cytoplasm. The enzyme catalyses phosphoenolpyruvate + UDP-N-acetyl-alpha-D-glucosamine = UDP-N-acetyl-3-O-(1-carboxyvinyl)-alpha-D-glucosamine + phosphate. Its pathway is cell wall biogenesis; peptidoglycan biosynthesis. In terms of biological role, cell wall formation. Adds enolpyruvyl to UDP-N-acetylglucosamine. In Shewanella halifaxensis (strain HAW-EB4), this protein is UDP-N-acetylglucosamine 1-carboxyvinyltransferase.